We begin with the raw amino-acid sequence, 141 residues long: ATP synthase F(0) complex subunit C3, mitochondrial (141 aa).

The transit peptide at 1-66 (MFACAKLACT…REFQTTAVNR (66 aa)) directs the protein to the mitochondrion. A helical transmembrane segment spans residues 82 to 102 (VGVAGSGAGIGTVFGSLIIGY). K109 bears the N6,N6,N6-trimethyllysine mark. The chain crosses the membrane as a helical span at residues 117 to 137 (ILGFALSEAMGLFCLMVAFLI).

The protein belongs to the ATPase C chain family. As to quaternary structure, F-type ATPases have 2 components, CF(1) - the catalytic core - and CF(0) - the membrane proton channel. CF(1) has five subunits: alpha(3), beta(3), gamma(1), delta(1), epsilon(1). CF(0) has three main subunits: a, b and c. Interacts with TMEM70 and TMEM242. Post-translationally, trimethylated by ATPSCKMT at Lys-109. Methylation is required for proper incorporation of the C subunit into the ATP synthase complex and mitochondrial respiration.

It localises to the mitochondrion membrane. Its function is as follows. Mitochondrial membrane ATP synthase (F(1)F(0) ATP synthase or Complex V) produces ATP from ADP in the presence of a proton gradient across the membrane which is generated by electron transport complexes of the respiratory chain. F-type ATPases consist of two structural domains, F(1) - containing the extramembraneous catalytic core and F(0) - containing the membrane proton channel, linked together by a central stalk and a peripheral stalk. During catalysis, ATP synthesis in the catalytic domain of F(1) is coupled via a rotary mechanism of the central stalk subunits to proton translocation. Part of the complex F(0) domain. A homomeric c-ring of probably 10 subunits is part of the complex rotary element. The chain is ATP synthase F(0) complex subunit C3, mitochondrial from Bos taurus (Bovine).